Here is a 246-residue protein sequence, read N- to C-terminus: Uridylate kinase (246 aa).

ATP is bound at residue 20-23 (KISG). The segment at 28 to 33 (GDQGYG) is involved in allosteric activation by GTP. Residue Gly62 participates in UMP binding. Residues Gly63 and Arg67 each coordinate ATP. UMP contacts are provided by residues Asp82 and 143 to 150 (TGNPYFTT). The ATP site is built by Thr170, Tyr176, and Asp179.

It belongs to the UMP kinase family. In terms of assembly, homohexamer.

It is found in the cytoplasm. It catalyses the reaction UMP + ATP = UDP + ADP. Its pathway is pyrimidine metabolism; CTP biosynthesis via de novo pathway; UDP from UMP (UMPK route): step 1/1. Its activity is regulated as follows. Allosterically activated by GTP. Inhibited by UTP. Catalyzes the reversible phosphorylation of UMP to UDP. In Cereibacter sphaeroides (strain ATCC 17025 / ATH 2.4.3) (Rhodobacter sphaeroides), this protein is Uridylate kinase.